The following is a 158-amino-acid chain: ATP synthase subunit b', chloroplastic (158 aa).

A helical membrane pass occupies residues 21-41 (GTLPLMALQFLILMLLLNTIF).

Belongs to the ATPase B chain family. F-type ATPases have 2 components, F(1) - the catalytic core - and F(0) - the membrane proton channel. F(1) has five subunits: alpha(3), beta(3), gamma(1), delta(1), epsilon(1). F(0) has four main subunits: a(1), b(1), b'(1) and c(10-14). The alpha and beta chains form an alternating ring which encloses part of the gamma chain. F(1) is attached to F(0) by a central stalk formed by the gamma and epsilon chains, while a peripheral stalk is formed by the delta, b and b' chains.

It is found in the plastid. Its subcellular location is the chloroplast thylakoid membrane. Its function is as follows. F(1)F(0) ATP synthase produces ATP from ADP in the presence of a proton or sodium gradient. F-type ATPases consist of two structural domains, F(1) containing the extramembraneous catalytic core and F(0) containing the membrane proton channel, linked together by a central stalk and a peripheral stalk. During catalysis, ATP synthesis in the catalytic domain of F(1) is coupled via a rotary mechanism of the central stalk subunits to proton translocation. In terms of biological role, component of the F(0) channel, it forms part of the peripheral stalk, linking F(1) to F(0). The b'-subunit is a diverged and duplicated form of b found in plants and photosynthetic bacteria. This is ATP synthase subunit b', chloroplastic from Porphyra purpurea (Red seaweed).